Reading from the N-terminus, the 322-residue chain is Phosphatidylserine decarboxylase proenzyme (322 aa).

Residues Asp90, His147, and Ser254 each act as charge relay system; for autoendoproteolytic cleavage activity in the active site. The Schiff-base intermediate with substrate; via pyruvic acid; for decarboxylase activity role is filled by Ser254. Pyruvic acid (Ser); by autocatalysis is present on Ser254. Residues 292–322 (TPDAEPSPLPAEEIEAEHDASPLVDDKKDQV) are disordered. Residues 308–322 (EHDASPLVDDKKDQV) are compositionally biased toward basic and acidic residues.

The protein belongs to the phosphatidylserine decarboxylase family. PSD-B subfamily. Prokaryotic type I sub-subfamily. Heterodimer of a large membrane-associated beta subunit and a small pyruvoyl-containing alpha subunit. It depends on pyruvate as a cofactor. Is synthesized initially as an inactive proenzyme. Formation of the active enzyme involves a self-maturation process in which the active site pyruvoyl group is generated from an internal serine residue via an autocatalytic post-translational modification. Two non-identical subunits are generated from the proenzyme in this reaction, and the pyruvate is formed at the N-terminus of the alpha chain, which is derived from the carboxyl end of the proenzyme. The autoendoproteolytic cleavage occurs by a canonical serine protease mechanism, in which the side chain hydroxyl group of the serine supplies its oxygen atom to form the C-terminus of the beta chain, while the remainder of the serine residue undergoes an oxidative deamination to produce ammonia and the pyruvoyl prosthetic group on the alpha chain. During this reaction, the Ser that is part of the protease active site of the proenzyme becomes the pyruvoyl prosthetic group, which constitutes an essential element of the active site of the mature decarboxylase.

The protein resides in the cell membrane. It carries out the reaction a 1,2-diacyl-sn-glycero-3-phospho-L-serine + H(+) = a 1,2-diacyl-sn-glycero-3-phosphoethanolamine + CO2. It functions in the pathway phospholipid metabolism; phosphatidylethanolamine biosynthesis; phosphatidylethanolamine from CDP-diacylglycerol: step 2/2. Functionally, catalyzes the formation of phosphatidylethanolamine (PtdEtn) from phosphatidylserine (PtdSer). The sequence is that of Phosphatidylserine decarboxylase proenzyme from Escherichia coli O7:K1 (strain IAI39 / ExPEC).